A 269-amino-acid polypeptide reads, in one-letter code: L-cystine-binding protein TcyJ (269 aa).

A signal peptide spans Met1–Gly20. Residue Cys21 is the site of N-palmitoyl cysteine attachment. Cys21 carries the S-diacylglycerol cysteine lipid modification.

The protein belongs to the bacterial solute-binding protein 3 family. As to quaternary structure, the complex is composed of two ATP-binding proteins (TcyN), two transmembrane proteins (TcyL and TcyM) and two solute-binding proteins (TcyJ and TcyK).

It localises to the cell membrane. In terms of biological role, part of the ABC transporter complex TcyJKLMN involved in L-cystine import. Is also involved in cystathionine, djenkolate, and S-methylcysteine transport. The sequence is that of L-cystine-binding protein TcyJ (tcyJ) from Bacillus subtilis (strain 168).